A 190-amino-acid polypeptide reads, in one-letter code: Adenylate kinase (190 aa).

12–17 (GSGKTT) lines the ATP pocket. The interval 33-62 (STGDLLRAEVASGSELGKTIDSFISKGNLV) is NMP. Residues Thr-34, Arg-39, 60–62 (NLV), 87–90 (GYPR), and Gln-94 each bind AMP. Positions 129-135 (GRARGAD) are LID. An ATP-binding site is contributed by Arg-130. AMP-binding residues include Arg-132 and Arg-144. Arg-172 contacts ATP.

The protein belongs to the adenylate kinase family. Monomer.

The protein localises to the cytoplasm. It carries out the reaction AMP + ATP = 2 ADP. It participates in purine metabolism; AMP biosynthesis via salvage pathway; AMP from ADP: step 1/1. Catalyzes the reversible transfer of the terminal phosphate group between ATP and AMP. Plays an important role in cellular energy homeostasis and in adenine nucleotide metabolism. The sequence is that of Adenylate kinase from Campylobacter lari (strain RM2100 / D67 / ATCC BAA-1060).